A 375-amino-acid polypeptide reads, in one-letter code: G-protein coupled estrogen receptor 1 (375 aa).

Position 1 is an N-acetylmethionine (methionine 1). The Extracellular portion of the chain corresponds to 1-62 (MDVTSQARGV…QQYVIGLFLS (62 aa)). N-linked (GlcNAc...) asparagine glycans are attached at residues asparagine 25, asparagine 32, and asparagine 44. A helical transmembrane segment spans residues 63 to 84 (CLYTIFLFPIGFVGNILILVVN). At 85–96 (ISFREKMTIPDL) the chain is on the cytoplasmic side. The chain crosses the membrane as a helical span at residues 97-120 (YFINLAVADLILVADSLIEVFNLH). Residues 121-132 (ERYYDIAVLCTF) are Extracellular-facing. Cysteine 130 and cysteine 207 are joined by a disulfide. A helical transmembrane segment spans residues 133–153 (MSLFLQVNMYSSVFFLTWMSF). Topologically, residues 154 to 175 (DRYIALARAMRCSLFRTKHHAR) are cytoplasmic. The helical transmembrane segment at 176–194 (LSCGLIWMASVSATLVPFT) threads the bilayer. Topologically, residues 195–220 (AVHLQHTDEACFCFADVREVQWLEVT) are extracellular. A helical membrane pass occupies residues 221 to 236 (LGFIVPFAIIGLCYSL). The Cytoplasmic portion of the chain corresponds to 237–259 (IVRVLVRAHRHRGLRPRRQKALR). Residues 260 to 280 (MILAVVLVFFVCWLPENVFIS) form a helical membrane-spanning segment. Over 281 to 306 (VHLLQRTQPGAAPCKQSFRHAHPLTG) the chain is Extracellular. A helical transmembrane segment spans residues 307–327 (HIVNLAAFSNSCLNPLIYSFL). Residues 328-375 (GETFRDKLRLYIEQKTNLPALNRFCHAALKAVIPDSTEQSDVRFSSAV) are Cytoplasmic-facing.

Belongs to the G-protein coupled receptor 1 family. As to quaternary structure, homodimer. Heterodimer; heterodimerizes with other G-protein-coupled receptor (GPCRs) like CRHR1, HTR1A and PAQR8. Interacts (via C-terminus tail motif) with DLG4 (via N-terminus tandem pair of PDZ domains); the interaction is direct and induces the increase of GPER1 protein levels residing at the plasma membrane surface in a estradiol-independent manner. Interacts with RAMP3; the interaction confers proper subcellular localization and function in cardioprotection. Interacts with KRT7 and KRT8. Interacts with EGFR; the interaction increases after agonist-induced stimulation in cancer-associated fibroblasts (CAF). Interacts with EGFR and ESR1. Post-translationally, ubiquitinated; ubiquitination occurs at the plasma membrane and leads to proteasome-mediated degradation. Glycosylated. Expressed in placenta, endothelial and epithelial cells, non laboring and laboring term myometrium, fibroblasts and cancer-associated fibroblasts (CAF), prostate cancer cells and invasive adenocarcinoma (at protein level). Ubiquitously expressed, but is most abundant in placenta. In brain regions, expressed as a 2.8 kb transcript in basal forebrain, frontal cortex, thalamus, hippocampus, caudate and putamen.

The protein resides in the nucleus. The protein localises to the cytoplasm. It localises to the perinuclear region. It is found in the cytoskeleton. Its subcellular location is the cell membrane. The protein resides in the basolateral cell membrane. The protein localises to the cytoplasmic vesicle membrane. It localises to the early endosome. It is found in the recycling endosome. Its subcellular location is the golgi apparatus membrane. The protein resides in the golgi apparatus. The protein localises to the trans-Golgi network. It localises to the endoplasmic reticulum membrane. It is found in the cell projection. Its subcellular location is the dendrite. The protein resides in the dendritic spine membrane. The protein localises to the axon. It localises to the postsynaptic density. It is found in the mitochondrion membrane. In terms of biological role, G-protein coupled estrogen receptor that binds to 17-beta-estradiol (E2) with high affinity, leading to rapid and transient activation of numerous intracellular signaling pathways. Stimulates cAMP production, calcium mobilization and tyrosine kinase Src inducing the release of heparin-bound epidermal growth factor (HB-EGF) and subsequent transactivation of the epidermal growth factor receptor (EGFR), activating downstream signaling pathways such as PI3K/Akt and ERK/MAPK. Mediates pleiotropic functions among others in the cardiovascular, endocrine, reproductive, immune and central nervous systems. Has a role in cardioprotection by reducing cardiac hypertrophy and perivascular fibrosis in a RAMP3-dependent manner. Regulates arterial blood pressure by stimulating vasodilation and reducing vascular smooth muscle and microvascular endothelial cell proliferation. Plays a role in blood glucose homeostasis contributing to the insulin secretion response by pancreatic beta cells. Triggers mitochondrial apoptosis during pachytene spermatocyte differentiation. Stimulates uterine epithelial cell proliferation. Enhances uterine contractility in response to oxytocin. Contributes to thymic atrophy by inducing apoptosis. Attenuates TNF-mediated endothelial expression of leukocyte adhesion molecules. Promotes neuritogenesis in developing hippocampal neurons. Plays a role in acute neuroprotection against NMDA-induced excitotoxic neuronal death. Increases firing activity and intracellular calcium oscillations in luteinizing hormone-releasing hormone (LHRH) neurons. Inhibits early osteoblast proliferation at growth plate during skeletal development. Inhibits mature adipocyte differentiation and lipid accumulation. Involved in the recruitment of beta-arrestin 2 ARRB2 at the plasma membrane in epithelial cells. Also functions as a receptor for aldosterone mediating rapid regulation of vascular contractibility through the PI3K/ERK signaling pathway. Involved in cancer progression regulation. Stimulates cancer-associated fibroblast (CAF) proliferation by a rapid genomic response through the EGFR/ERK transduction pathway. Associated with EGFR, may act as a transcription factor activating growth regulatory genes (c-fos, cyclin D1). Promotes integrin alpha-5/beta-1 and fibronectin (FN) matrix assembly in breast cancer cells. This chain is G-protein coupled estrogen receptor 1, found in Homo sapiens (Human).